A 139-amino-acid polypeptide reads, in one-letter code: D-ribose pyranase (139 aa).

H20 functions as the Proton donor in the catalytic mechanism. Substrate contacts are provided by residues D28, H106, and 128-130 (YAN).

The protein belongs to the RbsD / FucU family. RbsD subfamily. In terms of assembly, homodecamer.

Its subcellular location is the cytoplasm. It carries out the reaction beta-D-ribopyranose = beta-D-ribofuranose. It participates in carbohydrate metabolism; D-ribose degradation; D-ribose 5-phosphate from beta-D-ribopyranose: step 1/2. Functionally, catalyzes the interconversion of beta-pyran and beta-furan forms of D-ribose. The sequence is that of D-ribose pyranase from Pectobacterium carotovorum subsp. carotovorum (strain PC1).